A 329-amino-acid polypeptide reads, in one-letter code: 4-hydroxythreonine-4-phosphate dehydrogenase (329 aa).

Residues His136 and Thr137 each coordinate substrate. 3 residues coordinate a divalent metal cation: His166, His211, and His266. The substrate site is built by Lys274, Asn283, and Arg292.

This sequence belongs to the PdxA family. As to quaternary structure, homodimer. Zn(2+) serves as cofactor. The cofactor is Mg(2+). Co(2+) is required as a cofactor.

The protein localises to the cytoplasm. It catalyses the reaction 4-(phosphooxy)-L-threonine + NAD(+) = 3-amino-2-oxopropyl phosphate + CO2 + NADH. Its pathway is cofactor biosynthesis; pyridoxine 5'-phosphate biosynthesis; pyridoxine 5'-phosphate from D-erythrose 4-phosphate: step 4/5. Its function is as follows. Catalyzes the NAD(P)-dependent oxidation of 4-(phosphooxy)-L-threonine (HTP) into 2-amino-3-oxo-4-(phosphooxy)butyric acid which spontaneously decarboxylates to form 3-amino-2-oxopropyl phosphate (AHAP). The protein is 4-hydroxythreonine-4-phosphate dehydrogenase of Escherichia coli (strain K12 / MC4100 / BW2952).